The chain runs to 148 residues: Hemoglobin subunit alpha (148 aa).

Ser1 is subject to N-acetylserine. Positions 8–148 constitute a Globin domain; the sequence is DYSAADRAEL…VCHELSSRYR (141 aa). An O2-binding site is contributed by His66. His95 lines the heme b pocket.

Belongs to the globin family. As to quaternary structure, heterotetramer of two alpha chains and two beta chains. In terms of tissue distribution, red blood cells.

Functionally, involved in oxygen transport from the lung to the various peripheral tissues. The sequence is that of Hemoglobin subunit alpha (HBA) from Heterodontus portusjacksoni (Port Jackson shark).